Reading from the N-terminus, the 504-residue chain is Activin receptor type-1-like (504 aa).

A signal peptide spans 1–20; the sequence is MTLGIFRRVFLMLSVALGLT. Residues 21 to 121 lie on the Extracellular side of the membrane; sequence KGDLVKPSRG…EEPEVDAHLP (101 aa). The N-linked (GlcNAc...) asparagine glycan is linked to N34. Cystine bridges form between C35–C52, C37–C42, and C47–C70. Residues 74–77 form a mediates specificity for BMP ligand region; it reads NQEL. 2 disulfides stabilise this stretch: C78–C90 and C91–C96. Residue N99 is glycosylated (N-linked (GlcNAc...) asparagine). A helical transmembrane segment spans residues 122-142; it reads LILGPVLALLVLVALGTLGLW. Over 143–504 the chain is Cytoplasmic; sequence RVRRRQEKQR…QNPEKPKVIH (362 aa). Phosphoserine is present on residues S156, S161, and S162. The GS domain occupies 173–202; that stretch reads SMLGDFLVSDCTTGSGSGLPFLVQRTVARQ. Residues 203 to 504 enclose the Protein kinase domain; sequence VALVECVGKG…QNPEKPKVIH (302 aa). ATP contacts are provided by residues 209-217 and K230; that span reads VGKGRYGEV. Residue D331 is the Proton acceptor of the active site.

This sequence belongs to the protein kinase superfamily. TKL Ser/Thr protein kinase family. TGFB receptor subfamily. Interacts with TSC22D1/TSC-22. Mg(2+) serves as cofactor. It depends on Mn(2+) as a cofactor. In terms of tissue distribution, urogenital ridge, testis, ovary, brain and lung. In lung, found exclusively in pulmonary vessels of all sizes. Also expressed in aorta, vena cava and certain blood vessels of kidney, spleen, heart and intestine. For most blood vessels, a higher level of expression is found in endothelium than in adjacent smooth muscle.

The protein resides in the cell membrane. It catalyses the reaction L-threonyl-[receptor-protein] + ATP = O-phospho-L-threonyl-[receptor-protein] + ADP + H(+). The catalysed reaction is L-seryl-[receptor-protein] + ATP = O-phospho-L-seryl-[receptor-protein] + ADP + H(+). Its function is as follows. Type I receptor for TGF-beta family ligands BMP9/GDF2 and BMP10 and important regulator of normal blood vessel development. On ligand binding, forms a receptor complex consisting of two type II and two type I transmembrane serine/threonine kinases. Type II receptors phosphorylate and activate type I receptors which autophosphorylate, then bind and activate SMAD transcriptional regulators. May bind activin as well. In Rattus norvegicus (Rat), this protein is Activin receptor type-1-like (Acvrl1).